We begin with the raw amino-acid sequence, 391 residues long: GTPase Obg (391 aa).

Positions methionine 1–leucine 159 constitute an Obg domain. The region spanning alanine 160–glutamate 333 is the OBG-type G domain. GTP is bound by residues glycine 166–serine 173, phenylalanine 191–valine 195, aspartate 213–glycine 216, asparagine 283–aspartate 286, and serine 314–alanine 316. Mg(2+) contacts are provided by serine 173 and threonine 193.

It belongs to the TRAFAC class OBG-HflX-like GTPase superfamily. OBG GTPase family. As to quaternary structure, monomer. Requires Mg(2+) as cofactor.

It localises to the cytoplasm. In terms of biological role, an essential GTPase which binds GTP, GDP and possibly (p)ppGpp with moderate affinity, with high nucleotide exchange rates and a fairly low GTP hydrolysis rate. Plays a role in control of the cell cycle, stress response, ribosome biogenesis and in those bacteria that undergo differentiation, in morphogenesis control. In Haemophilus ducreyi (strain 35000HP / ATCC 700724), this protein is GTPase Obg.